A 135-amino-acid chain; its full sequence is Small ribosomal subunit protein bS16m (135 aa).

Residues 1 to 34 (MVQLTTIFCKAYHGGHLTIRLALGGCTNRPFYRI) constitute a mitochondrion transit peptide.

The protein belongs to the bacterial ribosomal protein bS16 family. Component of the mitochondrial ribosome small subunit (28S) which comprises a 12S rRNA and about 30 distinct proteins.

The protein localises to the mitochondrion. In Mus musculus (Mouse), this protein is Small ribosomal subunit protein bS16m (Mrps16).